Reading from the N-terminus, the 281-residue chain is NAD kinase (281 aa).

Asp-61 functions as the Proton acceptor in the catalytic mechanism. Residues 61–62 (DG), 134–135 (ND), Arg-145, Asp-164, 175–180 (TAYSLS), and Gln-234 contribute to the NAD(+) site.

This sequence belongs to the NAD kinase family. Requires a divalent metal cation as cofactor.

The protein resides in the cytoplasm. The enzyme catalyses NAD(+) + ATP = ADP + NADP(+) + H(+). Functionally, involved in the regulation of the intracellular balance of NAD and NADP, and is a key enzyme in the biosynthesis of NADP. Catalyzes specifically the phosphorylation on 2'-hydroxyl of the adenosine moiety of NAD to yield NADP. The protein is NAD kinase of Clostridium botulinum (strain 657 / Type Ba4).